We begin with the raw amino-acid sequence, 491 residues long: CRM-domain containing factor CFM9, mitochondrial (491 aa).

Residues 1–25 (MNQVFKGWSRGMSTSRGRSMRSKVE) constitute a mitochondrion transit peptide. Residues 1–34 (MNQVFKGWSRGMSTSRGRSMRSKVESRMRKESGK) are disordered. Positions 22–34 (SKVESRMRKESGK) are enriched in basic and acidic residues. The region spanning 90 to 187 (ELFTSEQVQA…RNYRQPKNLI (98 aa)) is the CRM domain. Basic and acidic residues predominate over residues 255 to 265 (PYVFHGDKQSE). Disordered regions lie at residues 255–287 (PYVF…DQEE) and 328–491 (RSRT…WDSD). Residues 277-287 (EPGDEDSDQEE) are compositionally biased toward acidic residues. Residues 345-359 (RRNDRDTHSQRRPND) show a composition bias toward basic and acidic residues. The span at 360–375 (SDDDDDDGELDSEDDE) shows a compositional bias: acidic residues. The segment covering 392–416 (RPREDFKRRSPDPRPRPRAQVRSDD) has biased composition (basic and acidic residues). A compositionally biased stretch (polar residues) spans 453-478 (TVSASSSKQSRFRNNSSRDGINNSKS).

Highly expressed in roots and meristemic regions of young seedlings. Expressed at low levels in stems, trichomes and stigma.

The protein localises to the mitochondrion. Its function is as follows. Involved in the splicing of group II introns in mitochondria. Required for the splicing of mitochondrial introns found in nad1, nad2, nad4, nad5, nad7, rps3 and cox2 genes. Splicing of mitochondrial introns is crucial for mitochondrial biogenesis and function, plant growth and development, and plant response to abiotic stresses. The chain is CRM-domain containing factor CFM9, mitochondrial from Arabidopsis thaliana (Mouse-ear cress).